The sequence spans 76 residues: uncharacterized protein (76 aa).

The segment at 27–76 is disordered; the sequence is SINNGEGSSVVHRDATAPPTPPVVPTSTLQVPGLQRARTPEPNDPRVANL.

This is an uncharacterized protein from Caenorhabditis elegans.